A 474-amino-acid polypeptide reads, in one-letter code: GTPase Der (474 aa).

EngA-type G domains lie at Leu2 to Glu166 and Leu212 to Ser385. Residues Gly8–Ser15, Asp55–Val59, Asn118–Asp121, Gly218–Ser225, Asp265–Leu269, and Asn330–Asp333 each bind GTP. The region spanning Ser386–Thr470 is the KH-like domain.

The protein belongs to the TRAFAC class TrmE-Era-EngA-EngB-Septin-like GTPase superfamily. EngA (Der) GTPase family. As to quaternary structure, associates with the 50S ribosomal subunit.

GTPase that plays an essential role in the late steps of ribosome biogenesis. This is GTPase Der from Chlamydia abortus (strain DSM 27085 / S26/3) (Chlamydophila abortus).